Reading from the N-terminus, the 986-residue chain is Vacuolar membrane protease (986 aa).

The Cytoplasmic segment spans residues 1–16; that stretch reads MAPLRLSRANPLAFAR. The helical transmembrane segment at 17–37 threads the bilayer; it reads WPVTLITAVVYLAFLIPLLIV. Residues 38-392 are Vacuolar-facing; the sequence is HHVVPSPPTA…TTFVLFELHT (355 aa). N-linked (GlcNAc...) asparagine glycosylation is present at N121. Residues H176 and D188 each contribute to the Zn(2+) site. E222 serves as the catalytic Proton acceptor. Residues E223, E248, and H321 each coordinate Zn(2+). Residues 393–413 traverse the membrane as a helical segment; it reads LFALSVTLLVVAPLALLVTGI. The Cytoplasmic segment spans residues 414 to 444; the sequence is ALTRADKMYLFRTSAKADESLDSVPLQGLRG. Residues 445–465 form a helical membrane-spanning segment; that stretch reads FFRFPFLFAIPTAVTVGLAYL. Topologically, residues 466-475 are vacuolar; it reads VTKVNPLIIH. The chain crosses the membrane as a helical span at residues 476 to 496; that stretch reads SSEYAVWSMMLSAWTFLAWFV. The Cytoplasmic segment spans residues 497 to 510; it reads SRMADFARPTALHR. Residues 511 to 531 traverse the membrane as a helical segment; sequence IYTLTWMFVLAWVLLVISTVY. Over 532-535 the chain is Vacuolar; the sequence is QNQR. A helical membrane pass occupies residues 536–556; sequence GLAGSYSVFFFFSGTFLATWI. At 557–668 the chain is on the cytoplasmic side; that stretch reads SYLELFSLPR…SASLPTWTWT (112 aa). The span at 573–585 shows a compositional bias: polar residues; the sequence is QNRPTSRRASSYG. A disordered region spans residues 573 to 622; the sequence is QNRPTSRRASSYGGSRLGTASGEDHEEDDHDAEEEEEEQEPTESTSLLGG. The segment covering 596 to 613 has biased composition (acidic residues); it reads DHEEDDHDAEEEEEEQEP. Residues 669-689 traverse the membrane as a helical segment; sequence LQFLLMAPLVLIMVGPLALLL. Topologically, residues 690–704 are vacuolar; the sequence is TSALHQTGQDGSSSL. The helical transmembrane segment at 705 to 725 threads the bilayer; sequence FIYVAIAALTTFLLTPLLPFI. Topologically, residues 726 to 732 are cytoplasmic; the sequence is HRHTYHL. Residues 733–753 traverse the membrane as a helical segment; that stretch reads PVFLLLVFLGTLIYNLVAFPF. Topologically, residues 754–986 are vacuolar; the sequence is SPTNRLKLFF…LVEGWKGFSI (233 aa). N-linked (GlcNAc...) asparagine glycans are attached at residues N799, N840, and N948. The disordered stretch occupies residues 840–859; sequence NTTDDKEGDEDTHHPRKARI.

This sequence belongs to the peptidase M28 family. Requires Zn(2+) as cofactor.

It is found in the vacuole membrane. Its function is as follows. May be involved in vacuolar sorting and osmoregulation. The sequence is that of Vacuolar membrane protease from Aspergillus niger (strain ATCC MYA-4892 / CBS 513.88 / FGSC A1513).